The sequence spans 354 residues: Protein-glutamate methylesterase/protein-glutamine glutaminase (354 aa).

In terms of domain architecture, Response regulatory spans 6 to 123; it reads RVLIVDDSAV…SQSLETLSAA (118 aa). At Asp57 the chain carries 4-aspartylphosphate. In terms of domain architecture, CheB-type methylesterase spans 159-351; sequence ARTTHQLLAV…GDLLKQLQTR (193 aa). Residues Ser171, His197, and Asp293 contribute to the active site.

It belongs to the CheB family. Post-translationally, phosphorylated by CheA. Phosphorylation of the N-terminal regulatory domain activates the methylesterase activity.

It localises to the cytoplasm. The enzyme catalyses [protein]-L-glutamate 5-O-methyl ester + H2O = L-glutamyl-[protein] + methanol + H(+). The catalysed reaction is L-glutaminyl-[protein] + H2O = L-glutamyl-[protein] + NH4(+). Functionally, involved in chemotaxis. Part of a chemotaxis signal transduction system that modulates chemotaxis in response to various stimuli. Catalyzes the demethylation of specific methylglutamate residues introduced into the chemoreceptors (methyl-accepting chemotaxis proteins or MCP) by CheR. Also mediates the irreversible deamidation of specific glutamine residues to glutamic acid. The polypeptide is Protein-glutamate methylesterase/protein-glutamine glutaminase (Bdellovibrio bacteriovorus (strain ATCC 15356 / DSM 50701 / NCIMB 9529 / HD100)).